Reading from the N-terminus, the 345-residue chain is tRNA-dihydrouridine(20/20a) synthase (345 aa).

FMN is bound by residues 26 to 28 (PML) and Q78. The active-site Proton donor is C108. FMN is bound by residues K147, H180, 220 to 222 (NGG), and 242 to 243 (GR).

Belongs to the Dus family. DusA subfamily. FMN serves as cofactor.

The catalysed reaction is 5,6-dihydrouridine(20) in tRNA + NADP(+) = uridine(20) in tRNA + NADPH + H(+). It catalyses the reaction 5,6-dihydrouridine(20) in tRNA + NAD(+) = uridine(20) in tRNA + NADH + H(+). It carries out the reaction 5,6-dihydrouridine(20a) in tRNA + NADP(+) = uridine(20a) in tRNA + NADPH + H(+). The enzyme catalyses 5,6-dihydrouridine(20a) in tRNA + NAD(+) = uridine(20a) in tRNA + NADH + H(+). Catalyzes the synthesis of 5,6-dihydrouridine (D), a modified base found in the D-loop of most tRNAs, via the reduction of the C5-C6 double bond in target uridines. Specifically modifies U20 and U20a in tRNAs. In Yersinia pestis, this protein is tRNA-dihydrouridine(20/20a) synthase.